The sequence spans 99 residues: UPF0213 protein SP_1535 (99 aa).

The GIY-YIG domain maps to 3–78 (HKAYMYVLEC…KRKKRPQKEE (76 aa)).

Belongs to the UPF0213 family.

The chain is UPF0213 protein SP_1535 from Streptococcus pneumoniae serotype 4 (strain ATCC BAA-334 / TIGR4).